The sequence spans 244 residues: MHTPFIVALDFPSKQEVERFLRPFAGTPLFVKVGMELYYQEGPAIVAFLKEQGHAVFLDLKLHDIPNTVKQAMKGLARVGADLVNVHAAGGRRMMEAAIEGLDAGTPSGRMRPRCIAVTQLTSTDERMLHEELWISRPLAETVAHYAALAKESGLDGVVCSANEAAFIKERCGASFLAVTPGIRFADDAAHDQVRVVTPRKARALGSDYIVVGRSLTRAADPLGAYARLQHEWNGGERESTTPT.

Substrate contacts are provided by residues D10, K32, D59–T68, T122, R184, Q193, G213, and R214. Residue K61 is the Proton donor of the active site.

Belongs to the OMP decarboxylase family. Type 1 subfamily. As to quaternary structure, homodimer.

The enzyme catalyses orotidine 5'-phosphate + H(+) = UMP + CO2. It functions in the pathway pyrimidine metabolism; UMP biosynthesis via de novo pathway; UMP from orotate: step 2/2. Catalyzes the decarboxylation of orotidine 5'-monophosphate (OMP) to uridine 5'-monophosphate (UMP). In Bacillus caldolyticus, this protein is Orotidine 5'-phosphate decarboxylase.